The sequence spans 126 residues: Fluoride-specific ion channel FluC (126 aa).

The next 4 helical transmembrane spans lie at 5 to 25 (ILVA…GAGV), 37 to 57 (VAIM…VVWA), 65 to 85 (LSPF…AFSL), and 101 to 121 (LYVA…LWVA). Na(+)-binding residues include Gly75 and Thr78.

Belongs to the fluoride channel Fluc/FEX (TC 1.A.43) family.

The protein resides in the cell inner membrane. The enzyme catalyses fluoride(in) = fluoride(out). Its activity is regulated as follows. Na(+) is not transported, but it plays an essential structural role and its presence is essential for fluoride channel function. Fluoride-specific ion channel. Important for reducing fluoride concentration in the cell, thus reducing its toxicity. The polypeptide is Fluoride-specific ion channel FluC (Roseobacter denitrificans (strain ATCC 33942 / OCh 114) (Erythrobacter sp. (strain OCh 114))).